Consider the following 1752-residue polypeptide: Chitin synthase E (1752 aa).

ATP is bound at residue 1–8 (GESGSGKT). A disordered region spans residues 492-520 (SSKPLRMPSMARRKTSPSSRLAFDAGDAD). The tract at residues 558–582 (LDIVNKCLSSTNLNPYFIFCLKPND) is actin-binding. 2 helical membrane-spanning segments follow: residues 789 to 809 (WIAL…KLFG) and 828 to 848 (LIIW…PGLV). Positions 852–940 (QHVYSAAELS…LLDYRPTNIS (89 aa)) constitute a Cytochrome b5 heme-binding domain. 2 N-linked (GlcNAc...) asparagine glycosylation sites follow: Asn938 and Asn963. The chain crosses the membrane as a helical span at residues 1099–1119 (FILAISVLICSIIVFKFLAAL). Residues Asn1322, Asn1356, and Asn1462 are each glycosylated (N-linked (GlcNAc...) asparagine). A run of 3 helical transmembrane segments spans residues 1494-1514 (LSTV…YWLV), 1520-1540 (IPYT…LIFI), and 1547-1567 (MVGW…PCPS). N-linked (GlcNAc...) asparagine glycosylation occurs at Asn1685. Positions 1689–1744 (LPSDDAILAEIREILRTADLMSVTKKSIKLELERAFGVNLDLKRPYINSGKGYTFP) constitute a DEK-C domain.

In the N-terminal section; belongs to the TRAFAC class myosin-kinesin ATPase superfamily. Myosin family. The protein in the C-terminal section; belongs to the chitin synthase family. Class V subfamily.

Its subcellular location is the cell membrane. The protein resides in the cell septum. The protein localises to the cell tip. It catalyses the reaction [(1-&gt;4)-N-acetyl-beta-D-glucosaminyl](n) + UDP-N-acetyl-alpha-D-glucosamine = [(1-&gt;4)-N-acetyl-beta-D-glucosaminyl](n+1) + UDP + H(+). Its function is as follows. Polymerizes chitin, a structural polymer of the cell wall and septum, by transferring the sugar moiety of UDP-GlcNAc to the non-reducing end of the growing chitin polymer. Important for hyphal growth and conidiophore development but not pathogenicity. This chain is Chitin synthase E, found in Aspergillus fumigatus (Neosartorya fumigata).